We begin with the raw amino-acid sequence, 190 residues long: Ohanin (190 aa).

The signal sequence occupies residues 1–20 (MLLFTLCFFADQENGGKALA). A B30.2/SPRY domain is found at 21–127 (SPPGNWQKAD…RIWQKGLWWL (107 aa)). Residues 128–190 (RRLETDSDKL…IGARVSLANL (63 aa)) constitute a propeptide that is removed on maturation.

Expressed by the venom gland.

It localises to the secreted. In terms of biological role, neurotoxin that produces dose-dependent hypolocomotion and hyperalgesia in mice. May directly act on the central nervous system, as it is 6500-fold more potent when administered intracerebroventricularly than intraperitoneal. This Ophiophagus hannah (King cobra) protein is Ohanin.